The chain runs to 528 residues: DEAD-box ATP-dependent RNA helicase 6 (528 aa).

2 stretches are compositionally biased toward low complexity: residues 1–15 (MNNN…PPGI) and 65–80 (QQYV…QQQQ). Residues 1–80 (MNNNNNNRGR…GYPQQIQQQQ (80 aa)) form a disordered region. The Q motif signature appears at 154–182 (NEFEDYFLKRDLLRGIYEKGFEKPSPIQE). Residues 185–355 (IPIALTGSDI…DRYLKKPYII (171 aa)) form the Helicase ATP-binding domain. 198–205 (AKNGTGKT) lines the ATP pocket. Thr-260 carries the post-translational modification Phosphothreonine. Residues 303-306 (DEAD) carry the DEAD box motif. In terms of domain architecture, Helicase C-terminal spans 365–525 (GVTQYYAFVE…PIPSLIDKAI (161 aa)).

The protein belongs to the DEAD box helicase family. DDX6/DHH1 subfamily.

The protein localises to the cytoplasm. The protein resides in the P-body. The enzyme catalyses ATP + H2O = ADP + phosphate + H(+). In terms of biological role, ATP-dependent RNA helicase involved in mRNA turnover, and more specifically in mRNA decapping. This is DEAD-box ATP-dependent RNA helicase 6 (RH6) from Arabidopsis thaliana (Mouse-ear cress).